The primary structure comprises 219 residues: LexA repressor (219 aa).

Residues 28 to 48 (RAEIAAELGFRSANAAEEHLQ) constitute a DNA-binding region (H-T-H motif). Active-site for autocatalytic cleavage activity residues include Ser138 and Lys175.

The protein belongs to the peptidase S24 family. In terms of assembly, homodimer.

It catalyses the reaction Hydrolysis of Ala-|-Gly bond in repressor LexA.. Functionally, represses a number of genes involved in the response to DNA damage (SOS response), including recA and lexA. In the presence of single-stranded DNA, RecA interacts with LexA causing an autocatalytic cleavage which disrupts the DNA-binding part of LexA, leading to derepression of the SOS regulon and eventually DNA repair. This Herminiimonas arsenicoxydans protein is LexA repressor.